We begin with the raw amino-acid sequence, 105 residues long: dATP/dGTP diphosphohydrolase (105 aa).

This sequence belongs to the Caudovirales dATP/dGTP diphosphohydrolase family. Co(2+) is required as a cofactor.

It carries out the reaction dGTP + H2O = dGMP + diphosphate + H(+). The catalysed reaction is dATP + H2O = dAMP + diphosphate + H(+). Its pathway is purine metabolism. In terms of biological role, catalyzes the hydrolysis of dGTP into dGMP, which is needed among other for the first step of biosynthesis of dZTP (2-amino-2'-deoxyadenosine-5'-triphosphate). The sequence is that of dATP/dGTP diphosphohydrolase from Cyanophage S-2L (Cyanobacteria phage S-2L).